Here is a 313-residue protein sequence, read N- to C-terminus: Porphobilinogen deaminase (313 aa).

At Cys242 the chain carries S-(dipyrrolylmethanemethyl)cysteine.

It belongs to the HMBS family. In terms of assembly, monomer. It depends on dipyrromethane as a cofactor.

The catalysed reaction is 4 porphobilinogen + H2O = hydroxymethylbilane + 4 NH4(+). It participates in porphyrin-containing compound metabolism; protoporphyrin-IX biosynthesis; coproporphyrinogen-III from 5-aminolevulinate: step 2/4. Its function is as follows. Tetrapolymerization of the monopyrrole PBG into the hydroxymethylbilane pre-uroporphyrinogen in several discrete steps. The chain is Porphobilinogen deaminase from Pseudomonas putida (strain ATCC 700007 / DSM 6899 / JCM 31910 / BCRC 17059 / LMG 24140 / F1).